The sequence spans 116 residues: NADH-ubiquinone oxidoreductase chain 3 (116 aa).

A run of 3 helical transmembrane segments spans residues 3–23 (LITT…TISF), 56–76 (FFLI…LLPL), and 87–107 (LTLI…IYEW).

It belongs to the complex I subunit 3 family.

The protein resides in the mitochondrion membrane. It catalyses the reaction a ubiquinone + NADH + 5 H(+)(in) = a ubiquinol + NAD(+) + 4 H(+)(out). In terms of biological role, core subunit of the mitochondrial membrane respiratory chain NADH dehydrogenase (Complex I) that is believed to belong to the minimal assembly required for catalysis. Complex I functions in the transfer of electrons from NADH to the respiratory chain. The immediate electron acceptor for the enzyme is believed to be ubiquinone. In Oncorhynchus gorbuscha (Pink salmon), this protein is NADH-ubiquinone oxidoreductase chain 3 (MT-ND3).